Reading from the N-terminus, the 490-residue chain is Katanin p60 ATPase-containing subunit A-like 1 (490 aa).

Met-1 is subject to N-acetylmethionine. A disordered region spans residues 87–182 (SCQDEPVRDP…ASDGEIPKFD (96 aa)). Positions 116–127 (SNREVRPLRKDM) are enriched in basic and acidic residues. Over residues 128 to 139 (AGVGARGPVGRA) the composition is skewed to low complexity. Basic and acidic residues predominate over residues 143-169 (SKSEKPSTSRDKDNRARGKDDKGRKNM). Residue Ser-174 is modified to Phosphoserine. 248 to 255 (GPPGTGKT) provides a ligand contact to ATP.

This sequence belongs to the AAA ATPase family. Katanin p60 subunit A1 subfamily. A-like 1 sub-subfamily. Interacts with KATNB1 and KATNBL1.

Its subcellular location is the cytoplasm. The protein resides in the cytoskeleton. It localises to the spindle pole. The protein localises to the spindle. It catalyses the reaction n ATP + n H2O + a microtubule = n ADP + n phosphate + (n+1) alpha/beta tubulin heterodimers.. Regulates microtubule dynamics in Sertoli cells, a process that is essential for spermiogenesis and male fertility. Severs microtubules in an ATP-dependent manner, promoting rapid reorganization of cellular microtubule arrays. Has microtubule-severing activity in vitro. This is Katanin p60 ATPase-containing subunit A-like 1 from Otolemur garnettii (Small-eared galago).